The following is a 78-amino-acid chain: Acyl carrier protein (78 aa).

A Carrier domain is found at 2 to 77 (STIEESVKAI…AAIDFIQASQ (76 aa)). An O-(pantetheine 4'-phosphoryl)serine modification is found at Ser37.

It belongs to the acyl carrier protein (ACP) family. 4'-phosphopantetheine is transferred from CoA to a specific serine of apo-ACP by AcpS. This modification is essential for activity because fatty acids are bound in thioester linkage to the sulfhydryl of the prosthetic group.

It is found in the cytoplasm. The protein operates within lipid metabolism; fatty acid biosynthesis. Its function is as follows. Carrier of the growing fatty acid chain in fatty acid biosynthesis. The protein is Acyl carrier protein of Sodalis glossinidius (strain morsitans).